A 454-amino-acid polypeptide reads, in one-letter code: Tubulin beta-3 chain (454 aa).

Q11, E75, S144, G148, T149, G150, N210, and N232 together coordinate GTP. Residue E75 coordinates Mg(2+). Residues 435–454 (TADDEFDPEVNQEEVEGDCI) are disordered.

It belongs to the tubulin family. In terms of assembly, dimer of alpha and beta chains. A typical microtubule is a hollow water-filled tube with an outer diameter of 25 nm and an inner diameter of 15 nM. Alpha-beta heterodimers associate head-to-tail to form protofilaments running lengthwise along the microtubule wall with the beta-tubulin subunit facing the microtubule plus end conferring a structural polarity. Microtubules usually have 13 protofilaments but different protofilament numbers can be found in some organisms and specialized cells. Requires Mg(2+) as cofactor.

The protein localises to the cytoplasm. It is found in the cytoskeleton. Functionally, tubulin is the major constituent of microtubules, a cylinder consisting of laterally associated linear protofilaments composed of alpha- and beta-tubulin heterodimers. Microtubules grow by the addition of GTP-tubulin dimers to the microtubule end, where a stabilizing cap forms. Below the cap, tubulin dimers are in GDP-bound state, owing to GTPase activity of alpha-tubulin. The protein is Tubulin beta-3 chain (betaTub60D) of Drosophila melanogaster (Fruit fly).